The following is a 78-amino-acid chain: Large ribosomal subunit protein uL29 (78 aa).

It belongs to the universal ribosomal protein uL29 family.

This chain is Large ribosomal subunit protein uL29, found in Rhodococcus erythropolis (strain PR4 / NBRC 100887).